Here is an 87-residue protein sequence, read N- to C-terminus: Small ribosomal subunit protein bS20 (87 aa).

Residues 1–26 (MANIKSAKKRAIQAEKARKHNASRRS) are disordered.

It belongs to the bacterial ribosomal protein bS20 family.

Its function is as follows. Binds directly to 16S ribosomal RNA. The polypeptide is Small ribosomal subunit protein bS20 (Tolumonas auensis (strain DSM 9187 / NBRC 110442 / TA 4)).